Here is a 505-residue protein sequence, read N- to C-terminus: RNA-splicing ligase RtcB homolog (505 aa).

Positions 119, 122, 227, 259, and 353 each coordinate Mn(2+). A GMP-binding site is contributed by 226 to 230 (NHYAE). Residues 353-354 (HN), 402-405 (GGTM), serine 409, 428-431 (HGAG), and lysine 504 contribute to the GMP site. Histidine 428 acts as the GMP-histidine intermediate in catalysis.

Belongs to the RtcB family. In terms of assembly, catalytic component of the tRNA-splicing ligase complex. Mn(2+) serves as cofactor.

It is found in the nucleus. Its subcellular location is the cytoplasm. The catalysed reaction is a 3'-end 3'-phospho-ribonucleotide-RNA + a 5'-end dephospho-ribonucleoside-RNA + GTP = a ribonucleotidyl-ribonucleotide-RNA + GMP + diphosphate. It carries out the reaction a 3'-end 2',3'-cyclophospho-ribonucleotide-RNA + a 5'-end dephospho-ribonucleoside-RNA + GTP + H2O = a ribonucleotidyl-ribonucleotide-RNA + GMP + diphosphate + H(+). Functionally, catalytic subunit of the tRNA-splicing ligase complex that acts by directly joining spliced tRNA halves to mature-sized tRNAs by incorporating the precursor-derived splice junction phosphate into the mature tRNA as a canonical 3',5'-phosphodiester. May act as an RNA ligase with broad substrate specificity, and may function toward other RNAs. This Xenopus tropicalis (Western clawed frog) protein is RNA-splicing ligase RtcB homolog.